A 403-amino-acid chain; its full sequence is Aspartic protease pepA (403 aa).

The first 20 residues, 1–20 (MVLITQLGAALAVFSALTVA), serve as a signal peptide directing secretion. A propeptide spans 21-67 (APTKGKARFSAPQVGIPKKAKHHPAAAYARALHKFGMKIPKAVSDAA) (activation peptide). The Peptidase A1 domain maps to 82–400 (YVTQVTVGGS…DTQGPRIGFA (319 aa)). The active site involves D98. N270 carries N-linked (GlcNAc...) asparagine glycosylation. Residue D293 is part of the active site. A disulfide bond links C329 and C362.

This sequence belongs to the peptidase A1 family. In terms of assembly, monomer.

The protein resides in the secreted. In terms of biological role, secreted aspartic endopeptidase that allows assimilation of proteinaceous substrates. The scissile peptide bond is attacked by a nucleophilic water molecule activated by two aspartic residues in the active site. Shows a broad primary substrate specificity. Favors hydrophobic residues at the P1 and P1' positions. The polypeptide is Aspartic protease pepA (Arthroderma gypseum (strain ATCC MYA-4604 / CBS 118893) (Microsporum gypseum)).